Here is a 348-residue protein sequence, read N- to C-terminus: Rhodopsin (348 aa).

M1 carries the post-translational modification N-acetylmethionine. Residues 1–36 are Extracellular-facing; that stretch reads MNGTEGPNFYVPFSNKTGVVRSPFEYPQYYLAEPWQ. N-linked (GlcNAc...) asparagine glycosylation is found at N2 and N15. A helical transmembrane segment spans residues 37–61; it reads FSMLAAYMFLLIVLGFPINFLTLYV. The Cytoplasmic portion of the chain corresponds to 62 to 73; it reads TVQHKNVRTPLN. The helical transmembrane segment at 74 to 96 threads the bilayer; sequence YILLNLAVANHFMVFGGFTTTLY. Residues 97-110 lie on the Extracellular side of the membrane; it reads TSLHGYFVFGSTGC. C110 and C187 are joined by a disulfide. Residues 111 to 133 form a helical membrane-spanning segment; that stretch reads NLEGFFATLGGEIALWSLVVLAI. Residues 134–136 carry the 'Ionic lock' involved in activated form stabilization motif; sequence ERY. Residues 134-152 lie on the Cytoplasmic side of the membrane; sequence ERYVVVCKPMSNFRFGENH. The helical transmembrane segment at 153–173 threads the bilayer; sequence AIMGVAFTWVMALACAAPPLV. At 174-202 the chain is on the extracellular side; it reads GWSRYIPEGMQCSCGIDYYTLKPEVNNES. Zn(2+) is bound at residue E201. Residues 203–224 form a helical membrane-spanning segment; that stretch reads FVIYMFVVHFTIPMTIIFFCYG. The Cytoplasmic segment spans residues 225–252; sequence QLVFTVKEAAAQQQESATTQKAEKEVTR. Residues 253–274 traverse the membrane as a helical segment; it reads MVIIMVIAFLICWVPYASVAFY. Topologically, residues 275–286 are extracellular; sequence IFTHQGSDFGPI. Q279 is a Zn(2+) binding site. A helical transmembrane segment spans residues 287–308; that stretch reads LMTLPAFFAKSSAIYNPVIYIM. Position 296 is an N6-(retinylidene)lysine (K296). The Cytoplasmic segment spans residues 309-348; the sequence is MNKQFRNCMLTTICCGKNPFGEEEGSTTASKTETSQVAPA. 2 S-palmitoyl cysteine lipidation sites follow: C322 and C323. The interaction with SAG stretch occupies residues 330 to 348; it reads EEEGSTTASKTETSQVAPA. The residue at position 334 (S334) is a Phosphoserine. A phosphothreonine mark is found at T335 and T336. S338 carries the phosphoserine modification. A phosphothreonine mark is found at T340 and T342. S343 carries the phosphoserine modification.

This sequence belongs to the G-protein coupled receptor 1 family. Opsin subfamily. In terms of assembly, homodimer. May form a complex composed of RHO, GRK1 and RCVRN in a Ca(2+)-dependent manner; RCVRN prevents the interaction between GRK1 and RHO. Interacts with GRK1. Interacts (phosphorylated form) with SAG. Interacts with GNAT1. Interacts with GNAT3. SAG and G-proteins compete for a common binding site. Interacts with PRCD; the interaction promotes PRCD stability. Forms a complex with ASAP1 and ARF4. Forms a complex with ASAP1, RAB11A, Rabin8/RAB3IP, ARF4 and RAB11FIP3; the complex regulates Golgi-to-cilia rhodopsin/RHO transport in photoreceptors. Phosphorylated on some or all of the serine and threonine residues present in the C-terminal region. In terms of processing, contains one covalently linked retinal chromophore. Upon light absorption, the covalently bound 11-cis-retinal is converted to all-trans-retinal. After hydrolysis of the Schiff base and release of the covalently bound all-trans-retinal, active rhodopsin is regenerated by binding of a fresh molecule of 11-cis-retinal.

It localises to the membrane. It is found in the cell projection. The protein resides in the cilium. The protein localises to the photoreceptor outer segment. In terms of biological role, photoreceptor required for image-forming vision at low light intensity. Required for photoreceptor cell viability after birth. Light-induced isomerization of 11-cis to all-trans retinal triggers a conformational change that activates signaling via G-proteins. Subsequent receptor phosphorylation mediates displacement of the bound G-protein alpha subunit by the arrestin SAG and terminates signaling. The protein is Rhodopsin (RHO) of Loxodonta africana (African elephant).